Here is a 297-residue protein sequence, read N- to C-terminus: Syntaxin-4 (297 aa).

Basic and acidic residues predominate over residues 1-12 (MRDRTHELRQGD). The tract at residues 1–21 (MRDRTHELRQGDDSSDDEDKE) is disordered. Residues 1–275 (MRDRTHELRQ…QKKARKKKVF (275 aa)) lie on the Cytoplasmic side of the membrane. Phosphoserine occurs at positions 14 and 15. Position 31 is a phosphothreonine (T31). Phosphoserine is present on residues S36, S117, S208, and S248. Residues 43-163 (QKVRTIRQTI…ERIRRQLKIT (121 aa)) adopt a coiled-coil conformation. The 63-residue stretch at 200 to 262 (LNEISARHSE…ERGQEHVKVA (63 aa)) folds into the t-SNARE coiled-coil homology domain. Residues 276–296 (IAICLSITVLILVVIIVISTL) traverse the membrane as a helical; Anchor for type IV membrane protein segment. A topological domain (extracellular) is located at residue V297.

Belongs to the syntaxin family. Component of the SNARE complex composed of STX4, SNAP23 and VAMP7 that interacts with SYT7 during lysosomal exocytosis. Found in a complex with VAMP8 and SNAP23. Detected in a complex with SNAP23 and STXBP4. Interacts with VAMP2. Interacts with SNAP23 and SNAPIN. Interacts with LLGL1. Interacts (via C-terminus) with CENPF. Interacts with DOC2B. Interacts with STXBP6. Interacts with STXBP3; excludes interaction with DOC2B and SNAP25. Interacts with STXBP4; excludes interaction with VAMP2. Interacts with STXBP5L.

Its subcellular location is the cell membrane. It localises to the cell projection. The protein resides in the neuron projection. The protein localises to the stereocilium. Plasma membrane t-SNARE that mediates docking of transport vesicles. Necessary for the translocation of SLC2A4 from intracellular vesicles to the plasma membrane. In neurons, recruited at neurite tips to membrane domains rich in the phospholipid 1-oleoyl-2-palmitoyl-PC (OPPC) which promotes neurite tip surface expression of the dopamine transporter SLC6A3/DAT by facilitating fusion of SLC6A3-containing transport vesicles with the plasma membrane. Together with STXB3 and VAMP2, may also play a role in docking/fusion of intracellular GLUT4-containing vesicles with the cell surface in adipocytes and in docking of synaptic vesicles at presynaptic active zones. Required for normal hearing. This chain is Syntaxin-4 (STX4), found in Bos taurus (Bovine).